We begin with the raw amino-acid sequence, 568 residues long: Poly(A) polymerase (568 aa).

ATP-binding positions include 87–89 (YGS), 99–102 (SDID), 100–102 (DID), D154, K215, Y224, and 233–234 (GV). Residues D100, D102, and D154 each coordinate Mg(2+). Residues S452 and S550 each carry the phosphoserine modification. A disordered region spans residues 525–568 (NEKRPSKKSKRKNLDARHETVKRSKSDAASGDNINGTTAAVDVN). A compositionally biased stretch (basic and acidic residues) spans 536–550 (KNLDARHETVKRSKS).

The protein belongs to the poly(A) polymerase family. As to quaternary structure, component of the cleavage and polyadenylation factor (CPF) complex, which is composed of PTI1, SYC1, SSU72, GLC7, MPE1, REF2, PFS2, PTA1, YSH1/BRR5, SWD2, CFT2/YDH1, YTH1, CFT1/YHH1, FIP1 and PAP1. Interacts with FIR1 and RRP6. Mg(2+) serves as cofactor. The cofactor is Mn(2+).

The protein localises to the nucleus. The catalysed reaction is RNA(n) + ATP = RNA(n)-3'-adenine ribonucleotide + diphosphate. Polymerase component of the cleavage and polyadenylation factor (CPF) complex, which plays a key role in polyadenylation-dependent pre-mRNA 3'-end formation and cooperates with cleavage factors including the CFIA complex and NAB4/CFIB. The polypeptide is Poly(A) polymerase (PAP1) (Saccharomyces cerevisiae (strain ATCC 204508 / S288c) (Baker's yeast)).